Here is a 206-residue protein sequence, read N- to C-terminus: ATP phosphoribosyltransferase (206 aa).

The protein belongs to the ATP phosphoribosyltransferase family. Short subfamily. In terms of assembly, heteromultimer composed of HisG and HisZ subunits.

Its subcellular location is the cytoplasm. The enzyme catalyses 1-(5-phospho-beta-D-ribosyl)-ATP + diphosphate = 5-phospho-alpha-D-ribose 1-diphosphate + ATP. It participates in amino-acid biosynthesis; L-histidine biosynthesis; L-histidine from 5-phospho-alpha-D-ribose 1-diphosphate: step 1/9. Functionally, catalyzes the condensation of ATP and 5-phosphoribose 1-diphosphate to form N'-(5'-phosphoribosyl)-ATP (PR-ATP). Has a crucial role in the pathway because the rate of histidine biosynthesis seems to be controlled primarily by regulation of HisG enzymatic activity. The protein is ATP phosphoribosyltransferase of Thermus thermophilus (strain ATCC 27634 / DSM 579 / HB8).